A 199-amino-acid chain; its full sequence is uncharacterized protein (199 aa).

Transmembrane regions (helical) follow at residues 1 to 21 (MEQFYYYWSMWFLWVLTTFIF), 28 to 48 (IAVSVFILTNIILSIHDIALY), 51 to 71 (LNAAYLMFFVCGCVYAGYLGM), 83 to 103 (LVAAYAFVYLFALYDPVWFII), 127 to 147 (QLVLFVLGMCQGELVYSFVIQ), and 154 to 174 (AVGGFQWLNACSAGMILLFGI).

It localises to the cell membrane. This is an uncharacterized protein from Bacillus subtilis (strain 168).